The sequence spans 201 residues: Small ribosomal subunit protein uS4c (201 aa).

Residues 13 to 43 (RRLGDLPGLSRKAIKRPYPPGEHGQKPRKPS) are disordered. One can recognise an S4 RNA-binding domain in the interval 90–154 (MRLDNTIFRL…SKQLVESYLA (65 aa)).

Belongs to the universal ribosomal protein uS4 family. Part of the 30S ribosomal subunit. Contacts protein S5. The interaction surface between S4 and S5 is involved in control of translational fidelity.

The protein resides in the plastid. It localises to the chloroplast. One of the primary rRNA binding proteins, it binds directly to 16S rRNA where it nucleates assembly of the body of the 30S subunit. Its function is as follows. With S5 and S12 plays an important role in translational accuracy. The sequence is that of Small ribosomal subunit protein uS4c (rps4) from Porphyra purpurea (Red seaweed).